Here is a 128-residue protein sequence, read N- to C-terminus: Calcitonin gene-related peptide 1 (128 aa).

An N-terminal signal peptide occupies residues 1–25 (MGFLKFSPFLVVSILLLYQACGLQA). A propeptide spanning residues 26–80 (VPLRSTLESSPGMAATLSEEEARLLLAALVQNYMQMKVRELEQEQEAEGSSVTAQ) is cleaved from the precursor. An intrachain disulfide couples C84 to C89. At F119 the chain carries Phenylalanine amide. Positions 125 to 128 (DLQA) are excised as a propeptide.

This sequence belongs to the calcitonin family.

It is found in the secreted. Its function is as follows. CGRP1/CALCA is a peptide hormone that induces vasodilation mediated by the CALCRL-RAMP1 receptor complex. Dilates a variety of vessels including the coronary, cerebral and systemic vasculature. Its abundance in the CNS also points toward a neurotransmitter or neuromodulator role. It also elevates platelet cAMP. CGRP1 can also bind and activate CALCR-RAMP1 (AMYR1) receptor complex. This is Calcitonin gene-related peptide 1 from Rattus norvegicus (Rat).